Reading from the N-terminus, the 341-residue chain is Putative ankyrin repeat protein FPV031 (341 aa).

5 ANK repeats span residues 23–55 (DRNSLLLVATKRNYIDVVRYLVKKGVDINFQET), 58–87 (DNLTPLMIASRFNSHQLVELLLNNGAIINQ), 92–124 (CGNTALHLAVKNDNRITVDILLFHGANTNITNN), 125–158 (DGFTPLHKAVIYNASIDIIKKLLRYKADVNIRDN), and 163–195 (TGLTPLDIAMSCNNYEIISLLVSHVIRLDYSTC).

In Fowlpox virus (strain NVSL) (FPV), this protein is Putative ankyrin repeat protein FPV031 (ANK3).